Here is a 668-residue protein sequence, read N- to C-terminus: MSDILSRHRQLCELLIEYGHQYYVLDNPTVPDAEYDRLMRELIVLEAEHPELKTPASPSVRVGGQPLTAFKQVRHEIPMLSLDNVFSGEELQAFEQRMRDRLKREVSFTFCCEPKLDGLAVSLLYVAGQLVQAATRGDGTTGEEITENVRTIKAIPLSLRGEGWPARLEVRGEVFMPKAGFEAMNAKALAAGEKVFVNPRNAAAGSLRQLDSRITASRPLAFYAYGVGVGGEQLGGSHFGRLNQLKEWGLPLSPEVKLKEGAAGCQAFHDDILARRGELPYEIDGVVYKVDAIPLQEELGFVARAPRWATAHKFPAQEEMTELENVEFQVGRTGAVTPVAKLKPVFVGGVTVSNATLHNADEIERLGVMIGDTVIVRRAGDVIPQIVAVVEAQRPADARAILFPTECPVCGSAVERLEGEAVTRCSGGLFCEAQRKEAIKHFAARRAMDVDGLGDKIVEQLVDKGLVKTPADLFSLNAIQLAGLERMGQKSALNLVAAIDAARSTTLPRFLFALGIREVGEATALNLANHFLTLDALRAASVEQLLEVADVGDIVAKHVYYFLRQPHNIEVLEALLAAGIHWPAIEKKEASEQPFAGKTFVLTGTLTTLSRNDAKAALQALGAKVAGSVSAKTDVLVAGEAAGSKLVKAQELGITVWSEEELQQALQG.

Residues 32 to 36 (DAEYD), 81 to 82 (SL), and E113 each bind NAD(+). K115 functions as the N6-AMP-lysine intermediate in the catalytic mechanism. NAD(+) is bound by residues R136, E173, K289, and K313. 4 residues coordinate Zn(2+): C407, C410, C425, and C431. The 79-residue stretch at 590–668 (ASEQPFAGKT…EEELQQALQG (79 aa)) folds into the BRCT domain.

Belongs to the NAD-dependent DNA ligase family. LigA subfamily. Requires Mg(2+) as cofactor. Mn(2+) serves as cofactor.

The enzyme catalyses NAD(+) + (deoxyribonucleotide)n-3'-hydroxyl + 5'-phospho-(deoxyribonucleotide)m = (deoxyribonucleotide)n+m + AMP + beta-nicotinamide D-nucleotide.. In terms of biological role, DNA ligase that catalyzes the formation of phosphodiester linkages between 5'-phosphoryl and 3'-hydroxyl groups in double-stranded DNA using NAD as a coenzyme and as the energy source for the reaction. It is essential for DNA replication and repair of damaged DNA. The chain is DNA ligase from Aeromonas hydrophila subsp. hydrophila (strain ATCC 7966 / DSM 30187 / BCRC 13018 / CCUG 14551 / JCM 1027 / KCTC 2358 / NCIMB 9240 / NCTC 8049).